The primary structure comprises 91 residues: Small ribosomal subunit protein uS19 (91 aa).

The protein belongs to the universal ribosomal protein uS19 family.

Protein S19 forms a complex with S13 that binds strongly to the 16S ribosomal RNA. This is Small ribosomal subunit protein uS19 from Methylobacillus flagellatus (strain ATCC 51484 / DSM 6875 / VKM B-1610 / KT).